Consider the following 299-residue polypeptide: ATP phosphoribosyltransferase (299 aa).

Belongs to the ATP phosphoribosyltransferase family. Long subfamily. Mg(2+) is required as a cofactor.

It is found in the cytoplasm. It catalyses the reaction 1-(5-phospho-beta-D-ribosyl)-ATP + diphosphate = 5-phospho-alpha-D-ribose 1-diphosphate + ATP. It participates in amino-acid biosynthesis; L-histidine biosynthesis; L-histidine from 5-phospho-alpha-D-ribose 1-diphosphate: step 1/9. With respect to regulation, feedback inhibited by histidine. Its function is as follows. Catalyzes the condensation of ATP and 5-phosphoribose 1-diphosphate to form N'-(5'-phosphoribosyl)-ATP (PR-ATP). Has a crucial role in the pathway because the rate of histidine biosynthesis seems to be controlled primarily by regulation of HisG enzymatic activity. This chain is ATP phosphoribosyltransferase, found in Shewanella sp. (strain MR-7).